We begin with the raw amino-acid sequence, 362 residues long: MKESLRLRLDQMVDRYEEVTALLSDPSVISDNNKFRELSVEHSDLMDITTLWQNYVGAEKDQADAEAMLKEASDPDMKEMMQEEIDSARDTIVEMEEALNLMMLPKDPNDKVPAFLEIRAGTGGDEAAIFSGDLFRMYQKFAQNQGWTLEILSANEGEHGGYKEIITRVSGNSVYGRLKFESGVHRVQRVPDTESQGRVHTSACTVAVMPEVEIDDTVDLNPADIRFDTFRSSGAGGQHVNTTDSAVRLTHIPTGTVVECQQERSQHKNRAQAMKMLISKIQQVKVQAQVDAADTIRRDLVGSGDRSERIRTYNFPQGRMTDHRINLTLYKLDSIMEGDLDEILDALLREHQADLMASIGGA.

At glutamine 238 the chain carries N5-methylglutamine.

This sequence belongs to the prokaryotic/mitochondrial release factor family. Post-translationally, methylated by PrmC. Methylation increases the termination efficiency of RF1.

It localises to the cytoplasm. Functionally, peptide chain release factor 1 directs the termination of translation in response to the peptide chain termination codons UAG and UAA. The sequence is that of Peptide chain release factor 1 from Psychrobacter cryohalolentis (strain ATCC BAA-1226 / DSM 17306 / VKM B-2378 / K5).